A 353-amino-acid polypeptide reads, in one-letter code: 3-ketosteroid-9-alpha-monooxygenase, ferredoxin reductase component (353 aa).

Positions Ser8–Lys117 constitute an FAD-binding FR-type domain. The region spanning Ala264–Glu353 is the 2Fe-2S ferredoxin-type domain. Residues Cys300, Cys305, Cys308, and Cys338 each contribute to the [2Fe-2S] cluster site.

Monomer. The two-component system 3-ketosteroid-9-alpha-monooxygenase is composed of an oxygenase component KshA and a reductase component KshB. Requires FAD as cofactor. The cofactor is [2Fe-2S] cluster.

It carries out the reaction androsta-1,4-diene-3,17-dione + 2 reduced [2Fe-2S]-[ferredoxin] + O2 + 2 H(+) = 9alpha-hydroxyandrosta-1,4-diene-3,17-dione + 2 oxidized [2Fe-2S]-[ferredoxin] + H2O. It functions in the pathway lipid metabolism; steroid biosynthesis. Involved in the degradation of cholesterol. Catalyzes the introduction of a 9a-hydroxyl moiety into 1,4-androstadiene-3,17-dione (ADD) to yield the 9alpha-hydroxy-1,4-androstadiene-3,17-dione (9OHADD) intermediate which spontaneously form 3-hydroxy-9,10-seconandrost-1,3,5(10)-triene-9,17-dione (HSA) via the meta-cleavage of ring B with concomitant aromatization of ring A. In Mycolicibacterium smegmatis (strain ATCC 700084 / mc(2)155) (Mycobacterium smegmatis), this protein is 3-ketosteroid-9-alpha-monooxygenase, ferredoxin reductase component (kshB).